The primary structure comprises 462 residues: Acetyl-CoA decarbonylase/synthase complex subunit gamma (462 aa).

The region spanning 1–60 (MAQLSAMDVYNLLPKANCGACGCKTCMEFATKLVNREAKPEDCPKLDDESLEKLQELLAP) is the 4Fe-4S domain. 4 residues coordinate [4Fe-4S] cluster: C18, C21, C26, and C43.

In terms of assembly, heterodimer of delta and gamma chains. The ACDS complex is made up of alpha, epsilon, beta, gamma and delta chains with a probable stoichiometry of (alpha(2)epsilon(2))(4)-beta(8)-(gamma(1)delta(1))(8). It depends on corrinoid as a cofactor. The cofactor is [4Fe-4S] cluster.

The catalysed reaction is 5,6,7,8-tetrahydrosarcinapterin + methyl-Co(III)-[corrinoid Fe-S protein] = 5-methyltetrahydrosarcinapterin + Co(I)-[corrinoid Fe-S protein] + H(+). Functionally, part of a complex that catalyzes the reversible cleavage of acetyl-CoA, allowing autotrophic growth from CO(2). The polypeptide is Acetyl-CoA decarbonylase/synthase complex subunit gamma (Methanopyrus kandleri (strain AV19 / DSM 6324 / JCM 9639 / NBRC 100938)).